The sequence spans 226 residues: AN1-type zinc finger protein 3 homolog (226 aa).

The A20-type zinc finger occupies 12–44 (PSLPPRCPCGFWGSSKTMNLCSKCFADFQKKQP). Residues Cys-18, Cys-20, Cys-32, and Cys-35 each contribute to the Zn(2+) site. The segment at 42–149 (KQPDEDTAPS…DRPDNSSRSK (108 aa)) is disordered. Polar residues-rich tracts occupy residues 49–59 (APSTSSSQSDL), 67–92 (DNGNTSIPTPTVNPTQQLPTELNVDS), and 105–114 (AHVSLTTPSK). The segment covering 134–146 (RLLDSGDRPDNSS) has biased composition (basic and acidic residues). An AN1-type zinc finger spans residues 150-199 (QKSRRRCFRCQIKLELVQQELGSCRCGYVFCMLHRLPEQHDCTFDHMGRG). Zn(2+) contacts are provided by Cys-156, Cys-159, Cys-173, Cys-175, Cys-180, His-183, His-189, and Cys-191.

This chain is AN1-type zinc finger protein 3 homolog (zfand3), found in Xenopus laevis (African clawed frog).